Here is a 549-residue protein sequence, read N- to C-terminus: Glucose-6-phosphate isomerase (549 aa).

Glutamate 355 acts as the Proton donor in catalysis. Active-site residues include histidine 386 and lysine 514.

This sequence belongs to the GPI family.

It localises to the cytoplasm. It carries out the reaction alpha-D-glucose 6-phosphate = beta-D-fructose 6-phosphate. Its pathway is carbohydrate biosynthesis; gluconeogenesis. It participates in carbohydrate degradation; glycolysis; D-glyceraldehyde 3-phosphate and glycerone phosphate from D-glucose: step 2/4. Functionally, catalyzes the reversible isomerization of glucose-6-phosphate to fructose-6-phosphate. This is Glucose-6-phosphate isomerase from Cronobacter sakazakii (strain ATCC BAA-894) (Enterobacter sakazakii).